Reading from the N-terminus, the 210-residue chain is Nta operon transcriptional regulator (210 aa).

The 55-residue stretch at 1-55 folds into the HTH gntR-type domain; that stretch reads MAVSYHFRPGERINEVELAAQLKVSRTPLREALNRLTTEGFLTTTANKGFFARVL. The H-T-H motif DNA-binding region spans 15–34; it reads EVELAAQLKVSRTPLREALN.

Its function is as follows. Probable regulator for the expression of the NTA monooxygenase subunits. The sequence is that of Nta operon transcriptional regulator (ntaR) from Aminobacter aminovorans (Chelatobacter heintzii).